A 128-amino-acid polypeptide reads, in one-letter code: Large ribosomal subunit protein bL17 (128 aa).

Belongs to the bacterial ribosomal protein bL17 family. In terms of assembly, part of the 50S ribosomal subunit. Contacts protein L32.

In Enterobacter sp. (strain 638), this protein is Large ribosomal subunit protein bL17.